A 418-amino-acid chain; its full sequence is Serine protease inhibitor A3N (418 aa).

An N-terminal signal peptide occupies residues methionine 1–aspartate 29. Phosphoserine is present on serine 93. N-linked (GlcNAc...) asparagine glycosylation is found at asparagine 104, asparagine 258, and asparagine 269. Residues glycine 367–arginine 394 form an RCL region.

Belongs to the serpin family. N-glycosylated. In terms of tissue distribution, liver.

The protein resides in the secreted. The polypeptide is Serine protease inhibitor A3N (Serpina3n) (Rattus norvegicus (Rat)).